Here is a 33-residue protein sequence, read N- to C-terminus: Gaegurin-3 (33 aa).

A disulfide bridge connects residues Cys-27 and Cys-33.

This sequence belongs to the frog skin active peptide (FSAP) family. Brevinin subfamily. As to quaternary structure, monomer. As to expression, expressed by the skin glands.

The protein resides in the secreted. Its function is as follows. Has a non-hemolytic activity. Has a broad spectrum of activity against both Gram-positive and Gram-negative bacteria, fungi and protozoa. This is Gaegurin-3 (GGN3) from Glandirana rugosa (Japanese wrinkled frog).